A 260-amino-acid chain; its full sequence is MAPCKPRTFTAGQDPLTKFDGAISVRNLPRPPDRLFLFHGIMRPSRGIYAKLIATGQKPPTHFHPSQWEFFRVLRGNLTIDFNGRAIHRTASDGELAVPPYTHHVIYGTPGTEMNEVEFVVSASDPAAEEQGATVMDQPFFENWYGYQEDVFQRGEKLDFIQVLSMFDAGGTYLSPPWWVPFRSWVGLFLGIVVGRWIGGLLGYAPFYPEWTTDWEAACETMQQSWFQRRFADPQAQERAREKFRGQLEQEASAKGGKSE.

This sequence belongs to the oxidoreductase OpS7 family.

Its pathway is secondary metabolite biosynthesis; terpenoid biosynthesis. Oxidoreductase; part of the gene cluster that mediates the biosynthesis of macrophorins, isoprenoid epoxycyclohexenones containing cyclized drimane moieties. The first step of the pathway is the synthesis of 6-methylsalicylic acid (6-MSA) by the polyketide synthase macA. 6-MSA is then converted to m-cresol by the decarboxylase macB. The cytochrome P450 monooxygenase macC then catalyzes the oxidation of m-cresol to toluquinol. Epoxidation of toluquinol is then performed by the short chain dehydrogenase macD, with the help of macE, and a further prenylation by macG leads to 7-deacetoxyyanuthone A. The next step is the hydroxylation of C-22 of 7-deacetoxyyanuthone A by the cytochrome P450 monooxygenase macH to yield 22-deacetylyanuthone A. O-Mevalon transferase macI then attaches mevalon to the hydroxyl group of 22-deacetylyanuthone A to produce yanuthone E. The terpene cyclase macJ catalyzes the cyclization of 22-deacetylyanuthone A to macrophorin A. MacJ is also able to catalyze cyclization of yanuthone E and 7-deacetoxyyanuthone A to their corresponding macrophorins. The macJ products can be further modified by macH and macJ, as well as by the FAD-dependent monooxygenase macF, to produce additional macrophorins, including 4'-oxomacrophorin A, 4'-oxomacrophorin D and 4'-oxomacrophorin E. The sequence is that of Oxidoreductase macE from Penicillium terrestre.